Consider the following 226-residue polypeptide: Transmembrane protein 204 (226 aa).

Residues Met-1 to Lys-5 lie on the Cytoplasmic side of the membrane. Residues Val-6–Phe-26 form a helical membrane-spanning segment. Residues Thr-27–Asn-103 lie on the Extracellular side of the membrane. A helical membrane pass occupies residues Leu-104 to Leu-124. The Cytoplasmic portion of the chain corresponds to Pro-125–Glu-136. A helical transmembrane segment spans residues Ala-137–Tyr-157. Over Arg-158 to Tyr-170 the chain is Extracellular. A helical membrane pass occupies residues Leu-171–Leu-191. Over His-192–Cys-226 the chain is Cytoplasmic.

It is found in the cell junction. Its subcellular location is the adherens junction. It localises to the cell membrane. In terms of biological role, can influence paracellular permeability. Appears to be involved in cell-cell interactions through adherens. The protein is Transmembrane protein 204 (TMEM204) of Bos taurus (Bovine).